A 409-amino-acid chain; its full sequence is MTQFRSDFLRLLETRGYIHQITDAKSLDEKASQSVIAAYIGFDPTAASLHVGSLLQIMMLRRLQQAGHKPIVLMGGGTGKIGDPSFKDEARKLLDEDTIKANIASIKRVFEHFLHFGDGENDAVMVDNAEWLDRLEYIPFLRDVGQHFSVNRMLSFDSVKLRLDREQSLSFLEFNYMILQAYDFLELSRRFGVCLQLGGSDQWGNIVNGIELARRMDGKEVFGLTSPLMTTADGVKMGKTVGGAVWLNGDMCSPYDYWQFWRNTHDADVERFLKLFTDLPLDEIARLAALEGSEINEAKKILANEATKLAHGEKAAEEAAATAKKTFEEGAAGDALPVMKVSDSSISLVDALVGLGLVASKAEARRMIRGGGARINGEKALDEKAVIEVTAENIRISAGKKAHGVIQAG.

Residue tyrosine 39 coordinates L-tyrosine. Positions 44-53 (PTAASLHVGS) match the 'HIGH' region motif. Positions 176 and 180 each coordinate L-tyrosine. Residues 236-240 (KMGKT) carry the 'KMSKS' region motif. Position 239 (lysine 239) interacts with ATP. In terms of domain architecture, S4 RNA-binding spans 346–408 (ISLVDALVGL…GKKAHGVIQA (63 aa)).

The protein belongs to the class-I aminoacyl-tRNA synthetase family. TyrS type 1 subfamily. Homodimer.

The protein resides in the cytoplasm. It catalyses the reaction tRNA(Tyr) + L-tyrosine + ATP = L-tyrosyl-tRNA(Tyr) + AMP + diphosphate + H(+). Its function is as follows. Catalyzes the attachment of tyrosine to tRNA(Tyr) in a two-step reaction: tyrosine is first activated by ATP to form Tyr-AMP and then transferred to the acceptor end of tRNA(Tyr). The sequence is that of Tyrosine--tRNA ligase from Zymomonas mobilis subsp. mobilis (strain ATCC 31821 / ZM4 / CP4).